The sequence spans 117 residues: Large ribosomal subunit protein bL20 (117 aa).

This sequence belongs to the bacterial ribosomal protein bL20 family.

Functionally, binds directly to 23S ribosomal RNA and is necessary for the in vitro assembly process of the 50S ribosomal subunit. It is not involved in the protein synthesizing functions of that subunit. The sequence is that of Large ribosomal subunit protein bL20 from Finegoldia magna (strain ATCC 29328 / DSM 20472 / WAL 2508) (Peptostreptococcus magnus).